A 463-amino-acid polypeptide reads, in one-letter code: Bifunctional protein HldE (463 aa).

The segment at 1-315 is ribokinase; the sequence is MKKILVIGDL…LILNQTHPKI (315 aa). 191 to 194 serves as a coordination point for ATP; that stretch reads NRAE. The active site involves aspartate 260. The segment at 334-463 is cytidylyltransferase; sequence FTNGCFDILH…IEKIKRTHND (130 aa).

This sequence in the N-terminal section; belongs to the carbohydrate kinase PfkB family. The protein in the C-terminal section; belongs to the cytidylyltransferase family. In terms of assembly, homodimer.

It catalyses the reaction D-glycero-beta-D-manno-heptose 7-phosphate + ATP = D-glycero-beta-D-manno-heptose 1,7-bisphosphate + ADP + H(+). It carries out the reaction D-glycero-beta-D-manno-heptose 1-phosphate + ATP + H(+) = ADP-D-glycero-beta-D-manno-heptose + diphosphate. The protein operates within nucleotide-sugar biosynthesis; ADP-L-glycero-beta-D-manno-heptose biosynthesis; ADP-L-glycero-beta-D-manno-heptose from D-glycero-beta-D-manno-heptose 7-phosphate: step 1/4. It functions in the pathway nucleotide-sugar biosynthesis; ADP-L-glycero-beta-D-manno-heptose biosynthesis; ADP-L-glycero-beta-D-manno-heptose from D-glycero-beta-D-manno-heptose 7-phosphate: step 3/4. Its pathway is bacterial outer membrane biogenesis; LPS core biosynthesis. Catalyzes the phosphorylation of D-glycero-D-manno-heptose 7-phosphate at the C-1 position to selectively form D-glycero-beta-D-manno-heptose-1,7-bisphosphate. Functionally, catalyzes the ADP transfer from ATP to D-glycero-beta-D-manno-heptose 1-phosphate, yielding ADP-D-glycero-beta-D-manno-heptose. In Helicobacter pylori (strain J99 / ATCC 700824) (Campylobacter pylori J99), this protein is Bifunctional protein HldE.